A 313-amino-acid chain; its full sequence is tRNA dimethylallyltransferase (313 aa).

Position 9–16 (9–16 (GPTAVGKT)) interacts with ATP. Residue 11–16 (TAVGKT) participates in substrate binding. The interaction with substrate tRNA stretch occupies residues 34-37 (DSMQ).

It belongs to the IPP transferase family. In terms of assembly, monomer. Mg(2+) serves as cofactor.

It carries out the reaction adenosine(37) in tRNA + dimethylallyl diphosphate = N(6)-dimethylallyladenosine(37) in tRNA + diphosphate. Functionally, catalyzes the transfer of a dimethylallyl group onto the adenine at position 37 in tRNAs that read codons beginning with uridine, leading to the formation of N6-(dimethylallyl)adenosine (i(6)A). The protein is tRNA dimethylallyltransferase of Lachnoclostridium phytofermentans (strain ATCC 700394 / DSM 18823 / ISDg) (Clostridium phytofermentans).